A 119-amino-acid chain; its full sequence is Cytochrome c55X (119 aa).

An N-terminal signal peptide occupies residues 1–20 (MNAPPDFRRAASHALWLALA). Positions 51, 54, and 55 each coordinate heme c.

Post-translationally, binds 1 heme c group covalently per subunit.

It is found in the periplasm. Monoheme c-type cytochrome. The protein is Cytochrome c55X (nirC) of Pseudomonas aeruginosa (strain ATCC 15692 / DSM 22644 / CIP 104116 / JCM 14847 / LMG 12228 / 1C / PRS 101 / PAO1).